We begin with the raw amino-acid sequence, 256 residues long: Probable aquaporin TIP4-2 (256 aa).

Transmembrane regions (helical) follow at residues 25 to 45 (AVAGELLFTFLFVFIGVASTI), 59 to 79 (AVTAAAMAQALVVAVLATAGF), 86 to 108 (LNPAVTLSLAVGGHITLFRSALY), 146 to 166 (GVAAEAVFTFTLLLVICATIL), and 178 to 198 (PLLTGLLVGANTVAGGALTGA). The short motif at 87–89 (NPA) is the NPA 1 element. Residues 201-203 (NPA) carry the NPA 2 motif. The chain crosses the membrane as a helical span at residues 220-240 (VYWVGPLAGGPLAVVAYELLF).

Belongs to the MIP/aquaporin (TC 1.A.8) family. TIP (TC 1.A.8.10) subfamily. Expressed in roots, leaves and anthers.

The protein localises to the vacuole membrane. Functionally, aquaporins facilitate the transport of water and small neutral solutes across cell membranes. May be involved in transport from the vacuolar compartment to the cytoplasm. The polypeptide is Probable aquaporin TIP4-2 (TIP4-2) (Oryza sativa subsp. japonica (Rice)).